The sequence spans 231 residues: 3-oxoadipate CoA-transferase subunit A (231 aa).

CoA is bound at residue 25–31; sequence GGFGTAG.

It belongs to the 3-oxoacid CoA-transferase subunit A family. Heterodimer.

The enzyme catalyses 3-oxoadipate + succinyl-CoA = 3-oxoadipyl-CoA + succinate. Its pathway is aromatic compound metabolism; beta-ketoadipate pathway; acetyl-CoA and succinyl-CoA from 3-oxoadipate: step 1/2. The sequence is that of 3-oxoadipate CoA-transferase subunit A (pcaI) from Pseudomonas putida (Arthrobacter siderocapsulatus).